The sequence spans 166 residues: Cofilin-1 (166 aa).

N-acetylalanine is present on Ala2. Ser3 and Ser8 each carry phosphoserine. Residues 4–153 (GVAVSDGVIK…KDRCTLAEKL (150 aa)) form the ADF-H domain. An N6-acetyllysine modification is found at Lys13. Thr25 is subject to Phosphothreonine. A Nuclear localization signal motif is present at residues 30-34 (KKRKK). Residue Ser41 is modified to Phosphoserine. Tyr68 is modified (phosphotyrosine). An N6-acetyllysine modification is found at Lys73. Lys132 participates in a covalent cross-link: Glycyl lysine isopeptide (Lys-Gly) (interchain with G-Cter in SUMO2). Tyr140 carries the post-translational modification Phosphotyrosine. Lys144 carries the N6-acetyllysine modification. Ser156 carries the phosphoserine modification.

This sequence belongs to the actin-binding proteins ADF family. As to quaternary structure, can bind G- and F-actin in a 1:1 ratio of cofilin to actin. It is a major component of intranuclear and cytoplasmic actin rods. Interacts with the subcortical maternal complex (SCMC) via interaction with TLE6 and NLRP5. Interacts with C9orf72. In terms of processing, inactivated by phosphorylation on Ser-3. Phosphorylated on Ser-3 in resting cells. Dephosphorylated by PDXP/chronophin; this restores its activity in promoting actin filament depolymerization. The phosphorylation of Ser-24 may prevent recognition of the nuclear localization signal. Phosphorylated via a ARRB1-RAC1-LIMK1-PAK1 cascade upon active ligand stimulation of atypical chemokine receptor ACKR2.

It localises to the nucleus matrix. Its subcellular location is the cytoplasm. The protein localises to the cytoskeleton. It is found in the cell projection. The protein resides in the ruffle membrane. It localises to the lamellipodium membrane. Its subcellular location is the lamellipodium. The protein localises to the growth cone. It is found in the axon. In terms of biological role, binds to F-actin and exhibits pH-sensitive F-actin depolymerizing activity. Important for normal progress through mitosis and normal cytokinesis. In conjunction with the subcortical maternal complex (SCMC), plays an essential role for zygotes to progress beyond the first embryonic cell divisions via regulation of actin dynamics. Required for the centralization of the mitotic spindle and symmetric division of zygotes. Plays a role in the regulation of cell morphology and cytoskeletal organization in epithelial cells. Required for the up-regulation of atypical chemokine receptor ACKR2 from endosomal compartment to cell membrane, increasing its efficiency in chemokine uptake and degradation. Required for neural tube morphogenesis and neural crest cell migration. In Bos taurus (Bovine), this protein is Cofilin-1 (CFL1).